The sequence spans 286 residues: Prohibitin-6, mitochondrial (286 aa).

Topologically, residues 1–12 (MNFKNVKVPKGP) are mitochondrial matrix. The helical; Signal-anchor for type II membrane protein transmembrane segment at 13–35 (GGGVIAAVVIGGLSLYGATHTLY) threads the bilayer. Over 36–286 (NVDGGHRAIV…AMDLDVKPKK (251 aa)) the chain is Mitochondrial intermembrane.

This sequence belongs to the prohibitin family. Component of a prohibitin multimeric complex in mitochondrial membranes. Mostly expressed in proliferative tissues, including vasculature, shoot and root apical tissues.

Its subcellular location is the mitochondrion inner membrane. Functionally, prohibitin probably acts as a holdase/unfoldase for the stabilization of newly synthesized mitochondrial proteins. The protein is Prohibitin-6, mitochondrial (PHB6) of Arabidopsis thaliana (Mouse-ear cress).